We begin with the raw amino-acid sequence, 256 residues long: UPF0259 membrane protein plu2479 (256 aa).

Helical transmembrane passes span 23 to 43 (TLTL…LFIP), 89 to 109 (IFSS…LVAA), 132 to 152 (LFLL…LMLV), 192 to 212 (LLVP…FIID), and 221 to 241 (MAGI…LIYL).

The protein belongs to the UPF0259 family.

It localises to the cell inner membrane. The sequence is that of UPF0259 membrane protein plu2479 from Photorhabdus laumondii subsp. laumondii (strain DSM 15139 / CIP 105565 / TT01) (Photorhabdus luminescens subsp. laumondii).